We begin with the raw amino-acid sequence, 136 residues long: Cyclase aurE (136 aa).

Belongs to the aurE cyclase family.

Its pathway is polyketide biosynthesis. Its function is as follows. Cyclase; part of the gene cluster that mediates the biosynthesis of aurovertins, fungal polyketides that exhibit potent inhibition of adenosine triphosphate synthase. Tha biosynthesis starts with the HR-PKS aurA that selects propionate as the starter unit; synthesizes a hexa-ene chain through the repeated functions of the KR and DH domains in the first six iterations; selectively introduces three alpha-methyl substitutions at C4, C6, and C16 using the S-adensylmethionine-dependent cMET; and shuts off KR and DH in the last three iterations to afford a 1,3,5-triketo portion that can undergo intramolecular cyclization to yield the alpha-pyrone intermediate. AurE may act as a cyclase and enhances the rate of pyrone formation and product release of aurA. The methyltransferase aurB then methylates the C17 hydroxyl group. C17 methylation is required to initiate epoxidation by the downstream monooxygenase aurC. The monooxygenase aurC and the epoxide hydrolase aurD can iteratively transform the terminal triene portion of the methylated precursor into the dioxabicyclo[3.2.1]octane scaffold of aurovertin E. Epoxidation modifications of the precursor occur in two separate steps; bis-epoxidation of the two terminal olefins takes place first, followed by another epoxidation that occurs at C7-C8 after tetrahydrofuran formation. The O-acyltransferase aurG converts aurovertin E to aurovertin A. This chain is Cyclase aurE, found in Calcarisporium arbuscula (Dendryphion arbuscula).